Reading from the N-terminus, the 167-residue chain is 3-isopropylmalate dehydratase small subunit (167 aa).

The protein belongs to the LeuD family. LeuD type 2 subfamily. In terms of assembly, heterodimer of LeuC and LeuD.

It carries out the reaction (2R,3S)-3-isopropylmalate = (2S)-2-isopropylmalate. It functions in the pathway amino-acid biosynthesis; L-leucine biosynthesis; L-leucine from 3-methyl-2-oxobutanoate: step 2/4. Its function is as follows. Catalyzes the isomerization between 2-isopropylmalate and 3-isopropylmalate, via the formation of 2-isopropylmaleate. This is 3-isopropylmalate dehydratase small subunit from Sulfurimonas denitrificans (strain ATCC 33889 / DSM 1251) (Thiomicrospira denitrificans (strain ATCC 33889 / DSM 1251)).